A 289-amino-acid chain; its full sequence is Polyisoprenoid diphosphate/phosphate phosphohydrolase PLPP6 (289 aa).

The disordered stretch occupies residues 1-81 (MQSPRRNAEG…SSQALPPQLP (81 aa)). The Cytoplasmic segment spans residues 1-126 (MQSPRRNAEG…ESSSWGSMRP (126 aa)). Phosphoserine occurs at positions 23, 30, and 64. A helical membrane pass occupies residues 127-147 (LMKLLEISGHGIPWLLGTLYC). Residues 148-158 (LSRSDSWAGRE) are Lumenal-facing. A helical transmembrane segment spans residues 159–179 (VLMNLLFALLLDLLLVSLIKG). Residues 178 to 186 (KGLVRRRRP) form a phosphatase sequence motif I region. Residues 180–222 (LVRRRRPAHNQMDMFFTISVDKYSFPSGHTTRAALVSRFILNH) are Cytoplasmic-facing. Residues 205–208 (PSGH) are phosphatase sequence motif II. H208 acts as the Proton donors in catalysis. A helical transmembrane segment spans residues 223 to 243 (LVLAIPLRVLVVLWAFILGLS). Residues 243–254 (SRVMLGRHNVTD) are phosphatase sequence motif III. At 244 to 254 (RVMLGRHNVTD) the chain is on the lumenal side. The Nucleophile role is filled by H250. Residues 255-275 (VAFGFFLGYMQYSIVDYCWLS) form a helical membrane-spanning segment. Over 276–289 (PRTAPVLFVLWNQP) the chain is Cytoplasmic.

The protein belongs to the PA-phosphatase related phosphoesterase family. Post-translationally, phosphorylation by PKC activates the phosphatase activity towards presqualene diphosphate.

Its subcellular location is the endoplasmic reticulum membrane. The protein resides in the nucleus envelope. It localises to the nucleus inner membrane. It carries out the reaction presqualene diphosphate + H2O = presqualene phosphate + phosphate + H(+). The enzyme catalyses presqualene phosphate + H2O = presqualene alcohol + phosphate. The catalysed reaction is (2E,6E)-farnesyl diphosphate + H2O = (2E,6E)-farnesyl phosphate + phosphate + H(+). It catalyses the reaction (2E,6E)-farnesyl phosphate + H2O = (2E,6E)-farnesol + phosphate. It carries out the reaction (2E,6E,10E)-geranylgeranyl diphosphate + H2O = (2E,6E,10E)-geranylgeranyl phosphate + phosphate + H(+). The enzyme catalyses (2E,6E,10E)-geranylgeranyl phosphate + H2O = (2E,6E,10E)-geranylgeraniol + phosphate. The catalysed reaction is (2E)-geranyl diphosphate + H2O = (2E)-geranyl phosphate + phosphate + H(+). It catalyses the reaction (2E)-geranyl phosphate + H2O = (2E)-geraniol + phosphate. It carries out the reaction 1,2-dihexadecanoyl-sn-glycero-3-phosphate + H2O = 1,2-dihexadecanoyl-sn-glycerol + phosphate. Magnesium-independent polyisoprenoid diphosphatase that catalyzes the sequential dephosphorylation of presqualene, farnesyl, geranyl and geranylgeranyl diphosphates. Functions in the innate immune response through the dephosphorylation of presqualene diphosphate which acts as a potent inhibitor of the signaling pathways contributing to polymorphonuclear neutrophils activation. May regulate the biosynthesis of cholesterol and related sterols by dephosphorylating presqualene and farnesyl diphosphate, two key intermediates in this biosynthetic pathway. May also play a role in protein prenylation by acting on farnesyl diphosphate and its derivative geranylgeranyl diphosphate, two precursors for the addition of isoprenoid anchors to membrane proteins. Has a lower activity towards phosphatidic acid (PA), but through phosphatidic acid dephosphorylation may participate in the biosynthesis of phospholipids and triacylglycerols. May also act on ceramide-1-P, lysophosphatidic acid (LPA) and sphing-4-enine 1-phosphate/sphingosine-1-phosphate. The chain is Polyisoprenoid diphosphate/phosphate phosphohydrolase PLPP6 from Bos taurus (Bovine).